The sequence spans 318 residues: Zinc chaperone YjiA (318 aa).

11-19 (GFLGAGKTT) provides a ligand contact to GTP. Positions 37, 42, 66, 74, and 114 each coordinate Zn(2+). A CXCC motif motif is present at residues 64–67 (CICC). Aspartate 161 is a binding site for GTP. Residues glutamate 167, histidine 170, and histidine 187 each coordinate Zn(2+). In terms of domain architecture, CobW C-terminal spans 224 to 315 (ISSIVVELDY…EEEIRAAFAG (92 aa)).

The protein belongs to the SIMIBI class G3E GTPase family. ZNG1 subfamily. Monomer in the apo form. Metal binding induces oligomerization. Forms homodimers and higher oligomers.

It catalyses the reaction GTP + H2O = GDP + phosphate + H(+). With respect to regulation, GTPase activity is inhibited by metal binding. Activity is decreased in the presence of Co(II) or Ni(II), and is completely inhibited in the presence of Zn(II). Functionally, zinc chaperone that directly transfers zinc cofactor to target proteins, thereby activating them. Zinc is transferred from the CXCC motif in the GTPase domain to the zinc binding site in target proteins in a process requiring GTP hydrolysis. The sequence is that of Zinc chaperone YjiA (yjiA) from Escherichia coli (strain K12).